The sequence spans 764 residues: Thyrotropin receptor (764 aa).

A signal peptide spans M1–G20. Residues G21–G413 lie on the Extracellular side of the membrane. A disulfide bond links C31 and C41. N-linked (GlcNAc...) asparagine glycans are attached at residues N77 and N99. LRR repeat units lie at residues L125–S149, T150–G174, C176–G199, K201–G223, Y225–H248, and K250–H271. Residues N177 and N198 are each glycosylated (N-linked (GlcNAc...) asparagine). N302 carries an N-linked (GlcNAc...) asparagine glycan. A Sulfotyrosine modification is found at Y385. A helical membrane pass occupies residues Y414–T441. The Cytoplasmic portion of the chain corresponds to S442 to R450. A helical transmembrane segment spans residues F451 to V473. The Extracellular portion of the chain corresponds to D474–C494. An intrachain disulfide couples C494 to C569. A helical membrane pass occupies residues N495 to L517. At E518–H537 the chain is on the cytoplasmic side. Residues A538–I560 traverse the membrane as a helical segment. Residues S561–L580 lie on the Extracellular side of the membrane. Residues A581 to V602 form a helical membrane-spanning segment. Topologically, residues K603–R625 are cytoplasmic. A helical membrane pass occupies residues M626 to M649. The Extracellular portion of the chain corresponds to N650 to K660. Residues I661 to T682 traverse the membrane as a helical segment. Residues K683–L764 lie on the Cytoplasmic side of the membrane. The PDZ-binding motif lies at T762–L764.

The protein belongs to the G-protein coupled receptor 1 family. FSH/LSH/TSH subfamily. As to quaternary structure, interacts with heterodimer GPHA2:GPHB5; this interaction stimulates cAMP production. Interacts (via the PDZ-binding motif) with SCRIB; regulates TSHR trafficking and function. Glycosylated. Post-translationally, sulfated. Sulfation on Tyr-385 plays a role in thyrotropin receptor binding and activation.

Its subcellular location is the cell membrane. The protein localises to the basolateral cell membrane. In terms of biological role, receptor for the thyroid-stimulating hormone (TSH) or thyrotropin. Also acts as a receptor for the heterodimeric glycoprotein hormone (GPHA2:GPHB5) or thyrostimulin. The activity of this receptor is mediated by G proteins which activate adenylate cyclase. Plays a central role in controlling thyroid cell metabolism. The chain is Thyrotropin receptor (TSHR) from Canis lupus familiaris (Dog).